We begin with the raw amino-acid sequence, 451 residues long: CBL-interacting protein kinase 22 (451 aa).

Positions 26 to 301 (YELGRVLGQG…IGEIFDHPWL (276 aa)) constitute a Protein kinase domain. ATP contacts are provided by residues 32-40 (LGQGASSKV) and Lys55. The Proton acceptor role is filled by Asp165. Positions 183 to 216 (DFGLSAFADADQHLGATDGLAATHCGSPAYVAPE) are activation loop. The NAF domain maps to 330–356 (ELEQAMELNAFDIIGFASGCDLSGLIG). A PPI region spans residues 361 to 389 (RVRFVLPGGDSKSVLDKVEKLGREEGLVV).

This sequence belongs to the protein kinase superfamily. CAMK Ser/Thr protein kinase family. SNF1 subfamily. Mn(2+) serves as cofactor.

It carries out the reaction L-seryl-[protein] + ATP = O-phospho-L-seryl-[protein] + ADP + H(+). The enzyme catalyses L-threonyl-[protein] + ATP = O-phospho-L-threonyl-[protein] + ADP + H(+). In terms of biological role, CIPK serine-threonine protein kinases interact with CBL proteins. Binding of a CBL protein to the regulatory NAF domain of CIPK protein lead to the activation of the kinase in a calcium-dependent manner. The protein is CBL-interacting protein kinase 22 (CIPK22) of Oryza sativa subsp. japonica (Rice).